Consider the following 205-residue polypeptide: Guanylyl cyclase-activating protein 1 (205 aa).

Glycine 2 is lipidated: N-myristoyl glycine. The residue at position 3 (asparagine 3) is a Deamidated asparagine. 4 EF-hand domains span residues 14 to 49 (SSTE…KNLS), 51 to 86 (WASQ…VLKG), 87 to 122 (KVEQ…IRAI), and 131 to 166 (TAEE…DQML). Ca(2+) contacts are provided by aspartate 64, asparagine 66, aspartate 68, tyrosine 70, glutamate 75, aspartate 100, aspartate 102, asparagine 104, cysteine 106, glutamate 111, aspartate 144, asparagine 146, aspartate 148, glutamate 150, and glutamate 155. A disordered region spans residues 185-205 (NGEQDEEGASGRETEAAEADG).

Homodimer. In terms of tissue distribution, detected in the retina. Detected in rod and cone photoreceptor cells (at protein level). Also present in certain pinealocytes.

It is found in the membrane. Its subcellular location is the photoreceptor inner segment. The protein localises to the cell projection. It localises to the cilium. The protein resides in the photoreceptor outer segment. Functionally, stimulates retinal guanylyl cyclase when free calcium ions concentration is low and inhibits guanylyl cyclase when free calcium ions concentration is elevated. This Ca(2+)-sensitive regulation of retinal guanylyl cyclase is a key event in recovery of the dark state of rod photoreceptors following light exposure. May be involved in cone photoreceptor light response and recovery of response in bright light. This chain is Guanylyl cyclase-activating protein 1 (GUCA1A), found in Bos taurus (Bovine).